Consider the following 485-residue polypeptide: Aldehyde dehydrogenase family 3 member A2 (485 aa).

At 1–463 the chain is on the cytoplasmic side; the sequence is MELEVRRVRQ…FLLKRFNKEK (463 aa). 185–190 is an NAD(+) binding site; the sequence is GNTAVG. Catalysis depends on residues Glu-207 and Cys-241. Ser-293 bears the Phosphoserine mark. A helical membrane pass occupies residues 464-484; the sequence is LGLLLLTFLGIVAAVLVKAEY. Positions 481–484 match the Prevents secretion from ER motif; it reads KAEY.

The protein belongs to the aldehyde dehydrogenase family. In terms of assembly, homodimer.

The protein localises to the microsome membrane. It localises to the endoplasmic reticulum membrane. The enzyme catalyses an aldehyde + NAD(+) + H2O = a carboxylate + NADH + 2 H(+). The catalysed reaction is a fatty aldehyde + NAD(+) + H2O = a fatty acid + NADH + 2 H(+). It carries out the reaction (2E)-hexadecenal + NAD(+) + H2O = (E)-hexadec-2-enoate + NADH + 2 H(+). It catalyses the reaction hexadecanoate + NADH + 2 H(+) = hexadecanal + NAD(+) + H2O. The enzyme catalyses 22-oxodocosanoate + NAD(+) + H2O = docosanedioate + NADH + 2 H(+). The catalysed reaction is 2,6,10,14-tetramethylpentadecanal + NAD(+) + H2O = 2,6,10,14-tetramethylpentadecanoate + NADH + 2 H(+). It carries out the reaction octadecanal + NAD(+) + H2O = octadecanoate + NADH + 2 H(+). It catalyses the reaction dodecanoate + NADH + 2 H(+) = dodecanal + NAD(+) + H2O. The enzyme catalyses decanal + NAD(+) + H2O = decanoate + NADH + 2 H(+). The catalysed reaction is tetradecanal + NAD(+) + H2O = tetradecanoate + NADH + 2 H(+). It carries out the reaction octanal + NAD(+) + H2O = octanoate + NADH + 2 H(+). It catalyses the reaction heptanal + NAD(+) + H2O = heptanoate + NADH + 2 H(+). The enzyme catalyses (2E,6E)-farnesal + NAD(+) + H2O = (2E,6E)-farnesoate + NADH + 2 H(+). Functionally, catalyzes the oxidation of medium and long-chain aliphatic aldehydes to fatty acids. Active on a variety of saturated and unsaturated aliphatic aldehydes between 6 and 24 carbons in length. Responsible for conversion of the sphingosine 1-phosphate (S1P) degradation product hexadecenal to hexadecenoic acid. The chain is Aldehyde dehydrogenase family 3 member A2 (ALDH3A2) from Pongo abelii (Sumatran orangutan).